The sequence spans 332 residues: 2,3-diketo-L-gulonate reductase (332 aa).

Catalysis depends on histidine 44, which acts as the Proton donor. NAD(+)-binding positions include 168–174, 224–225, and 304–306; these read ITMVDMS, WK, and GHE.

The protein belongs to the LDH2/MDH2 oxidoreductase family. DlgD subfamily. Homodimer.

The protein localises to the cytoplasm. The enzyme catalyses 3-dehydro-L-gulonate + NAD(+) = 2,3-dioxo-L-gulonate + NADH + H(+). It catalyses the reaction 3-dehydro-L-gulonate + NADP(+) = 2,3-dioxo-L-gulonate + NADPH + H(+). In terms of biological role, catalyzes the reduction of 2,3-diketo-L-gulonate in the presence of NADH, to form 3-keto-L-gulonate. The chain is 2,3-diketo-L-gulonate reductase from Salmonella paratyphi A (strain ATCC 9150 / SARB42).